Consider the following 1010-residue polypeptide: PHD finger protein 20 (1010 aa).

Tudor domains are found at residues 4–69 and 83–147; these read HPPN…RPLE and GSSE…GNAR. Disordered stretches follow at residues 142–373 and 483–609; these read IVGN…EGQL and EKSP…GKLK. Over residues 147–246 the composition is skewed to basic and acidic residues; the sequence is RPKETDHKSL…VEKKPEKDLV (100 aa). Ser-159 bears the Phosphoserine mark. The segment at residues 257-269 is a DNA-binding region (a.T hook); that stretch reads KRKRGRPPSITPT. A compositionally biased stretch (polar residues) spans 267 to 280; sequence TPTAVDSNSQTLQP. Composition is skewed to basic and acidic residues over residues 292 to 325, 483 to 493, and 525 to 541; these read KRSD…DLSR, EKSPEPEEGPG, and AKEK…ELVR. Residues 455–485 form a C2H2-type zinc finger; the sequence is FRCKVLDCLKFFRKAKLLHYHMKYFHGMEKS. Residues 542-554 are compositionally biased toward basic residues; that stretch reads VKPKKKKKKKKKT. The segment at 657 to 703 adopts a PHD-type zinc-finger fold; sequence RCICEVQEENDFMIQCEECQCWQHGVCMGLLEENVPEKYTCYVCQDP. Residues 804 to 827 form a disordered region; that stretch reads RSEESPSYRTLNGAVEKPSPLPRS. An N6-acetyllysine modification is found at Lys-841. Residues Ser-876 and Ser-878 each carry the phosphoserine modification. Positions 877-902 are disordered; the sequence is LSPRLGWPIDQDRSRGDIDPKPSSPK. Residues 886–902 show a composition bias toward basic and acidic residues; that stretch reads DQDRSRGDIDPKPSSPK.

In terms of assembly, homodimer; disulfide-linked. Component of some MLL1/MLL complex, at least composed of the core components KMT2A/MLL1, ASH2L, HCFC1, WDR5 and RBBP5, as well as the facultative components BACC1, CHD8, E2F6, HSP70, INO80C, KANSL1, LAS1L, MAX, MCRS1, MGA, MYST1/MOF, PELP1, PHF20, PRP31, RING2, RUVB1/TIP49A, RUVB2/TIP49B, SENP3, TAF1, TAF4, TAF6, TAF7, TAF9 and TEX10. Component of the NSL complex at least composed of MOF/KAT8, KANSL1, KANSL2, KANSL3, MCRS1, PHF20, OGT1/OGT, WDR5 and HCFC1. Ubiquitinated by TRIM26; leading to proteasomal degradation.

The protein localises to the nucleus. In terms of biological role, contributes to methyllysine-dependent p53/TP53 stabilization and up-regulation after DNA damage. Methyllysine-binding protein, component of the MOF histone acetyltransferase protein complex. Not required for maintaining the global histone H4 'Lys-16' acetylation (H4K16ac) levels or locus specific histone acetylation, but instead works downstream in transcriptional regulation of MOF target genes. As part of the NSL complex it may be involved in acetylation of nucleosomal histone H4 on several lysine residues. The sequence is that of PHD finger protein 20 (Phf20) from Mus musculus (Mouse).